Consider the following 103-residue polypeptide: Small ribosomal subunit protein uS10 (103 aa).

It belongs to the universal ribosomal protein uS10 family. As to quaternary structure, part of the 30S ribosomal subunit.

Its function is as follows. Involved in the binding of tRNA to the ribosomes. The sequence is that of Small ribosomal subunit protein uS10 from Vibrio campbellii (strain ATCC BAA-1116).